We begin with the raw amino-acid sequence, 131 residues long: NADPH-dependent 7-cyano-7-deazaguanine reductase (131 aa).

The Thioimide intermediate role is filled by Cys-48. Asp-55 (proton donor) is an active-site residue. Substrate contacts are provided by residues 70–72 and 89–90; these read VEL and QE.

Belongs to the GTP cyclohydrolase I family. QueF type 1 subfamily.

The protein localises to the cytoplasm. The catalysed reaction is 7-aminomethyl-7-carbaguanine + 2 NADP(+) = 7-cyano-7-deazaguanine + 2 NADPH + 3 H(+). The protein operates within tRNA modification; tRNA-queuosine biosynthesis. Its function is as follows. Catalyzes the NADPH-dependent reduction of 7-cyano-7-deazaguanine (preQ0) to 7-aminomethyl-7-deazaguanine (preQ1). The polypeptide is NADPH-dependent 7-cyano-7-deazaguanine reductase (Caldicellulosiruptor bescii (strain ATCC BAA-1888 / DSM 6725 / KCTC 15123 / Z-1320) (Anaerocellum thermophilum)).